Consider the following 847-residue polypeptide: Receptor-like protein 12 (847 aa).

The N-terminal stretch at 1–27 (MMIRSHRHWVFSSRIIIFLSLLVHSLA) is a signal peptide. Residues 28–798 (SSSPHFCRDD…LSEAEENMFN (771 aa)) are Extracellular-facing. N52, N66, N103, and N132 each carry an N-linked (GlcNAc...) asparagine glycan. LRR repeat units follow at residues 109-133 (LQYL…LGNL), 135-157 (HLTL…IGNL), 158-181 (NQLR…LGNL), 183-205 (RLVN…IGDL), 206-229 (KQLR…LGNL), 231-253 (NLVH…IGNL), 254-277 (IELR…FANL), 279-301 (KLSI…MSIF), 302-325 (HNLE…LLLI), 326-350 (PSLE…TSSS), 351-374 (TKLQ…ISRL), 375-398 (LNLE…ISKL), 400-422 (NLLH…LWRL), 424-442 (TMVL…SQEE), 443-466 (ALIE…ICKL), 467-491 (SSLG…RNFS), 492-514 (GSIK…IFSK), 516-539 (TELV…LINC), 541-562 (ALEL…WLES), 563-587 (LPSL…HASI), 589-613 (FQSL…YFSN), 657-681 (RRDF…LGYL), 682-704 (KELR…FLAN), 705-729 (LTKL…LAAL), and 731-754 (FLSY…QFQR). N-linked (GlcNAc...) asparagine glycosylation is present at N180. N210 and N228 each carry an N-linked (GlcNAc...) asparagine glycan. Residues N263, N276, and N289 are each glycosylated (N-linked (GlcNAc...) asparagine). N346 is a glycosylation site (N-linked (GlcNAc...) asparagine). A glycan (N-linked (GlcNAc...) asparagine) is linked at N386. An N-linked (GlcNAc...) asparagine glycan is attached at N437. N489 and N503 each carry an N-linked (GlcNAc...) asparagine glycan. Residue N601 is glycosylated (N-linked (GlcNAc...) asparagine). N-linked (GlcNAc...) asparagine glycans are attached at residues N688 and N704. N736 is a glycosylation site (N-linked (GlcNAc...) asparagine). The chain crosses the membrane as a helical span at residues 799 to 819 (WVAAAIAYGPGVLCGLVIGHF). The Cytoplasmic portion of the chain corresponds to 820–847 (YTSHNHEWFTEKFGRKQHKALTSVKCSL).

Belongs to the RLP family.

The protein resides in the cell membrane. In terms of biological role, involved in the perception of CLV3 and CLV3-like peptides, that act as extracellular signals regulating meristems maintenance. The polypeptide is Receptor-like protein 12 (Arabidopsis thaliana (Mouse-ear cress)).